The following is a 425-amino-acid chain: Serine--tRNA ligase (425 aa).

Position 230 to 232 (threonine 230 to glutamate 232) interacts with L-serine. An ATP-binding site is contributed by arginine 261–glutamate 263. An L-serine-binding site is contributed by glutamate 284. Glutamate 348–serine 351 serves as a coordination point for ATP. Serine 384 serves as a coordination point for L-serine.

Belongs to the class-II aminoacyl-tRNA synthetase family. Type-1 seryl-tRNA synthetase subfamily. Homodimer. The tRNA molecule binds across the dimer.

The protein resides in the cytoplasm. The catalysed reaction is tRNA(Ser) + L-serine + ATP = L-seryl-tRNA(Ser) + AMP + diphosphate + H(+). It catalyses the reaction tRNA(Sec) + L-serine + ATP = L-seryl-tRNA(Sec) + AMP + diphosphate + H(+). It functions in the pathway aminoacyl-tRNA biosynthesis; selenocysteinyl-tRNA(Sec) biosynthesis; L-seryl-tRNA(Sec) from L-serine and tRNA(Sec): step 1/1. In terms of biological role, catalyzes the attachment of serine to tRNA(Ser). Is also able to aminoacylate tRNA(Sec) with serine, to form the misacylated tRNA L-seryl-tRNA(Sec), which will be further converted into selenocysteinyl-tRNA(Sec). The sequence is that of Serine--tRNA ligase from Streptococcus equi subsp. zooepidemicus (strain H70).